The chain runs to 550 residues: Dihydroxy-acid dehydratase (550 aa).

Asp-78 is a binding site for Mg(2+). A [2Fe-2S] cluster-binding site is contributed by Cys-119. Positions 120 and 121 each coordinate Mg(2+). At Lys-121 the chain carries N6-carboxylysine. Cys-191 contacts [2Fe-2S] cluster. Position 440 (Glu-440) interacts with Mg(2+). Ser-466 serves as the catalytic Proton acceptor.

Belongs to the IlvD/Edd family. Homodimer. [2Fe-2S] cluster serves as cofactor. Mg(2+) is required as a cofactor.

The catalysed reaction is (2R)-2,3-dihydroxy-3-methylbutanoate = 3-methyl-2-oxobutanoate + H2O. The enzyme catalyses (2R,3R)-2,3-dihydroxy-3-methylpentanoate = (S)-3-methyl-2-oxopentanoate + H2O. Its pathway is amino-acid biosynthesis; L-isoleucine biosynthesis; L-isoleucine from 2-oxobutanoate: step 3/4. The protein operates within amino-acid biosynthesis; L-valine biosynthesis; L-valine from pyruvate: step 3/4. Functionally, functions in the biosynthesis of branched-chain amino acids. Catalyzes the dehydration of (2R,3R)-2,3-dihydroxy-3-methylpentanoate (2,3-dihydroxy-3-methylvalerate) into 2-oxo-3-methylpentanoate (2-oxo-3-methylvalerate) and of (2R)-2,3-dihydroxy-3-methylbutanoate (2,3-dihydroxyisovalerate) into 2-oxo-3-methylbutanoate (2-oxoisovalerate), the penultimate precursor to L-isoleucine and L-valine, respectively. This Methanococcus maripaludis (strain C6 / ATCC BAA-1332) protein is Dihydroxy-acid dehydratase.